We begin with the raw amino-acid sequence, 141 residues long: ATP synthase epsilon chain (141 aa).

The protein belongs to the ATPase epsilon chain family. In terms of assembly, F-type ATPases have 2 components, CF(1) - the catalytic core - and CF(0) - the membrane proton channel. CF(1) has five subunits: alpha(3), beta(3), gamma(1), delta(1), epsilon(1). CF(0) has three main subunits: a, b and c.

It is found in the cell membrane. Produces ATP from ADP in the presence of a proton gradient across the membrane. This chain is ATP synthase epsilon chain, found in Mycoplasma mobile (strain ATCC 43663 / 163K / NCTC 11711) (Mesomycoplasma mobile).